The sequence spans 420 residues: MPKLPRGLRFGADNEILNDFQELWFPDLFIESSDTHPWYTLKGRVLNAHLDDRLPNVGGRQVRRTPHRVTVPIASSGLRPVTTVQYDPAALSFLLNARVDWDFGNGDSANLVINDFLFRTFAPKEFDFSNSLVPRYTQAFSAFNAKYGTMIGEGLETIKYLGLLLRRLREGYRAVKRGDLRALRRVIQSYHNGKWKPATAGNLWLEFRYGLMPLFYDIRDVMLDWQNRHDKIQRLLRFSVGHGEDYVVEFDNLYPAVAYFKLKGEITLERRHRHGISYANREGYAVFDNGSLRPVSDWKELATAFINPHEVAWELTPYSFVVDWFLNVGDILAQQGQLYHNIDIVDGFDRRDIRLKSFTIKGERNGRPVNVSASLSAVDLFYSRLHTSNLPFATLDLDTTFSSFKHVLDSIFLLTQRVKR.

RNA-binding stretches follow at residues 158 to 176, 226 to 236, and 294 to 298; these read IKYL…RAVK, QNRHDKIQRLL, and PVSDW.

The protein belongs to the Leviviricetes maturation protein family. As to quaternary structure, interacts with host MurA; this interaction inhibits the first step in host cell wall synthesis. Interacts with the capsid protein.

It localises to the virion. Induces host cell lysis. Inhibits host MurA activity thereby blocking the synthesis of murein precursors necessary for the host cell wall biosynthesis. May be responsible for the attachment to the host pilus. Makes extensive contacts with the viral genome. This is Maturation protein A2 from Escherichia virus Qbeta (Bacteriophage Q-beta).